We begin with the raw amino-acid sequence, 62 residues long: Teretoxin Tan1.1 (62 aa).

Positions 1–21 (MSCFPVLFVMMLLVSQSVWAF) are cleaved as a signal peptide. Positions 22–38 (PGPETRDGSVQDAESRR) are excised as a propeptide.

Belongs to the teretoxin A (TA) superfamily. Post-translationally, contains 2 disulfide bonds. In terms of tissue distribution, expressed by the venom duct.

It localises to the secreted. The chain is Teretoxin Tan1.1 from Terebra anilis (Auger snail).